A 206-amino-acid polypeptide reads, in one-letter code: Ubiquitin-conjugating enzyme E2 S (206 aa).

A UBC core domain is found at Gln14–Gln160. Cys98 acts as the Glycyl thioester intermediate in catalysis. The tract at residues Gly165–Lys191 is disordered. Over residues Asp168–Lys191 the composition is skewed to basic and acidic residues.

Belongs to the ubiquitin-conjugating enzyme family.

It carries out the reaction S-ubiquitinyl-[E1 ubiquitin-activating enzyme]-L-cysteine + [E2 ubiquitin-conjugating enzyme]-L-cysteine = [E1 ubiquitin-activating enzyme]-L-cysteine + S-ubiquitinyl-[E2 ubiquitin-conjugating enzyme]-L-cysteine.. The protein operates within protein modification; protein ubiquitination. Its function is as follows. Catalyzes the covalent attachment of ubiquitin to other proteins. Acts as an essential factor of the anaphase promoting complex/cyclosome (APC/C), a cell cycle-regulated ubiquitin ligase that controls progression through mitosis. Acts by specifically elongating polyubiquitin chains initiated by the E2 enzyme vih/UbcH10 on APC/C substrates, enhancing the degradation of APC/C substrates by the proteasome and promoting mitotic exit. This is Ubiquitin-conjugating enzyme E2 S from Drosophila mojavensis (Fruit fly).